Reading from the N-terminus, the 229-residue chain is Transmembrane 4 L6 family member 20 (229 aa).

At 1–14 (MTCCEGWTSCNGFS) the chain is on the lumenal side. The chain crosses the membrane as a helical span at residues 15–35 (LLVLLLLGVVLNAIPLIVSLV). Topologically, residues 36-44 (EEDQFSQNP) are cytoplasmic. Residues 45 to 65 (ISCFEWWFPGIIGAGLMAIPA) traverse the membrane as a helical segment. The Lumenal portion of the chain corresponds to 66–83 (TTMSLTARKRACCNNRTG). The helical transmembrane segment at 84–104 (MFLSSLFSVITVIGALYCMLI) threads the bilayer. The Cytoplasmic segment spans residues 105-185 (SIQALLKGPL…HFDSEENKHR (81 aa)). The helical transmembrane segment at 186–206 (LIHFSVFLGLLLVGILEVLFG) threads the bilayer. At 207–229 (LSQIVIGFLGCLCGVSKRRSQIV) the chain is on the lumenal side.

Belongs to the L6 tetraspanin family. Post-translationally, glycosylated at Asn-132, Asn-148 and Asn-163 in presence of ceramide which inverts the orientation of TM4SF20 in membranes exposing these residues to the endoplasmic reticulum lumen. In terms of processing, cleaved by signal peptidase at Ser-14 but the peptide does not act as a signal peptide. Cleavage is inhibited by ceramide which inverts the orientation of TM4SF20 in membranes exposing the N-terminus to the cytosol and not to the endoplasmic reticulum lumen. Expressed in the brain, with high levels in the parietal lobe, hippocampus, pons, white matter and cerebellum.

The protein resides in the membrane. Its subcellular location is the endoplasmic reticulum membrane. Polytopic transmembrane protein that inhibits regulated intramembrane proteolysis (RIP) of CREB3L1, inhibiting its activation and the induction of collagen synthesis. In response to ceramide, which alters TM4SF20 membrane topology, stimulates RIP activation of CREB3L1. Ceramide reverses the direction through which transmembrane helices are translocated into the endoplasmic reticulum membrane during translation of TM4SF20, this mechanism is called 'regulated alternative translocation' (RAT) and regulates the function of the transmembrane protein. The protein is Transmembrane 4 L6 family member 20 (TM4SF20) of Homo sapiens (Human).